A 327-amino-acid polypeptide reads, in one-letter code: Alkene monooxygenase system, ferredoxin--NAD(+) reductase component (327 aa).

The region spanning 1 to 89 is the 2Fe-2S ferredoxin-type domain; that stretch reads MRLNDGRSFS…DLEINVRAGD (89 aa). [2Fe-2S] cluster contacts are provided by cysteine 32, cysteine 37, cysteine 40, and cysteine 73. The FAD-binding FR-type domain occupies 96 to 194; that stretch reads PRRHAARVTV…EGPYGRAYLR (99 aa).

It belongs to the bacterial ring-hydroxylating dioxygenase ferredoxin reductase family. Monomer. The alkene monooxygenase multicomponent enzyme system is composed of an electron transfer component and a monooxygenase component interacting with the effector protein XamoD. The electron transfer component is composed of a ferredoxin reductase (XamoF) and a ferredoxin (XamoC), and the monooxygenase component is formed by a heterohexamer (dimer of heterotrimers) of two alpha subunits (XamoA), two beta subunits (XamoE) and two gamma subunits (XamoB). FAD serves as cofactor. The cofactor is [2Fe-2S] cluster.

The protein resides in the cytoplasm. The enzyme catalyses 2 reduced [2Fe-2S]-[ferredoxin] + NAD(+) + H(+) = 2 oxidized [2Fe-2S]-[ferredoxin] + NADH. Its function is as follows. Reductase component of the alkene monooxygenase multicomponent enzyme system which catalyzes the O2- and NADH-dependent epoxidation of short chain (C2 to C6) alkenes to their corresponding epoxides. Ferredoxin reductase catalyzes the transfer of electrons from NADH to ferredoxin (XamoC). NADPH is also effective but with a rate approximately 3-fold lower than with NADH. The protein is Alkene monooxygenase system, ferredoxin--NAD(+) reductase component of Xanthobacter autotrophicus (strain ATCC BAA-1158 / Py2).